We begin with the raw amino-acid sequence, 1091 residues long: Voltage-dependent calcium channel subunit alpha-2/delta-3 (1091 aa).

Positions methionine 1–serine 33 are cleaved as a signal peptide. At glutamate 34 to glycine 1068 the chain is on the extracellular side. The N-linked (GlcNAc...) asparagine glycan is linked to asparagine 166. In terms of domain architecture, VWFA spans aspartate 256–leucine 438. Residues aspartate 262, serine 264, and serine 266 each coordinate a divalent metal cation. The short motif at aspartate 262–serine 266 is the MIDAS-like motif element. Asparagine 309 is a glycosylation site (N-linked (GlcNAc...) asparagine). A disulfide bridge connects residues cysteine 412 and cysteine 1055. The Cache domain occupies tryptophan 452–arginine 549. Asparagine 553 and asparagine 632 each carry an N-linked (GlcNAc...) asparagine glycan. The residue at position 924 (tyrosine 924) is a Phosphotyrosine. A helical membrane pass occupies residues glycine 1069–phenylalanine 1089. The Cytoplasmic portion of the chain corresponds to serine 1090–arginine 1091.

It belongs to the calcium channel subunit alpha-2/delta family. As to quaternary structure, dimer formed of alpha-2-2 and delta-2 chains; disulfide-linked. Voltage-dependent calcium channels are multisubunit complexes, consisting of alpha-1 (CACNA1), alpha-2 (CACNA2D), beta (CACNB) and delta (CACNA2D) subunits in a 1:1:1:1 ratio. In terms of processing, N-glycosylated. Post-translationally, may be proteolytically processed into subunits alpha-2-3 and delta-3 that are disulfide-linked. It is however unclear whether such cleavage really takes place in vivo and has a functional role. Brain-specific. Predominantly expressed in the caudate putamen, entorhinal complex, hippocampus and cortex.

The protein resides in the membrane. Its function is as follows. The alpha-2/delta subunit of voltage-dependent calcium channels regulates calcium current density and activation/inactivation kinetics of the calcium channel. Acts as a regulatory subunit for P/Q-type calcium channel (CACNA1A), N-type (CACNA1B), L-type (CACNA1C OR CACNA1D) but not T-type (CACNA1G). This is Voltage-dependent calcium channel subunit alpha-2/delta-3 (Cacna2d3) from Mus musculus (Mouse).